The primary structure comprises 353 residues: N-acetyl-gamma-glutamyl-phosphate reductase (353 aa).

C155 is an active-site residue.

It belongs to the NAGSA dehydrogenase family. Type 1 subfamily.

It is found in the cytoplasm. It carries out the reaction N-acetyl-L-glutamate 5-semialdehyde + phosphate + NADP(+) = N-acetyl-L-glutamyl 5-phosphate + NADPH + H(+). The protein operates within amino-acid biosynthesis; L-arginine biosynthesis; N(2)-acetyl-L-ornithine from L-glutamate: step 3/4. Catalyzes the NADPH-dependent reduction of N-acetyl-5-glutamyl phosphate to yield N-acetyl-L-glutamate 5-semialdehyde. This is N-acetyl-gamma-glutamyl-phosphate reductase from Microcystis aeruginosa (strain NIES-843 / IAM M-2473).